A 170-amino-acid polypeptide reads, in one-letter code: Cathelicidin antimicrobial peptide (170 aa).

The signal sequence occupies residues 1–30 (MNTQWDSPSLGRWSLVLLLLGLVMPLAIVA). The propeptide at 31 to 131 (QVLSYQEAVL…DISCDKDKRK (101 aa)) is cathelin-like domain (CLD). 2 disulfides stabilise this stretch: Cys-86-Cys-97 and Cys-108-Cys-125. The segment at 150-162 (LKNIGQRIKDFFG) is active core.

Belongs to the cathelicidin family. In terms of assembly, monomer, homodimer or homotrimer (in vitro). Oligomerizes as tetra- or hexamer in solution (in vitro). In terms of processing, proteolytically cleaved by proteinase PRTN3 into antibacterial peptide LL-37. Proteolytically cleaved by cathepsin CTSG and neutrophil elastase ELANE. Resistant to proteolytic degradation in solution, and when bound to both zwitterionic (mimicking mammalian membranes) and negatively charged membranes (mimicking bacterial membranes). Post-translationally, after secretion onto the skin surface, the CAMP gene product is processed by a serine protease-dependent mechanism into multiple novel antimicrobial peptides distinct from and shorter than cathelicidin LL-37. These peptides show enhanced antimicrobial action, acquiring the ability to kill skin pathogens such as S.aureus, E.coli and C.albicans. These peptides have lost the ability to stimulate CXCL8/IL8 release from keratinocytes. The peptides act synergistically, killing bacteria at lower concentrations when present together, and maintain activity at increased salt condition.

The protein resides in the secreted. The protein localises to the vesicle. In terms of biological role, antimicrobial protein that is an integral component of the innate immune system. Binds to bacterial lipopolysaccharides (LPS). Acts via neutrophil N-formyl peptide receptors to enhance the release of CXCL2. Postsecretory processing generates multiple cathelicidin antimicrobial peptides with various lengths which act as a topical antimicrobial defense in sweat on skin. The unprocessed precursor form, cathelicidin antimicrobial peptide, inhibits the growth of Gram-negative E.coli and E.aerogenes with efficiencies comparable to that of the mature peptide LL-37 (in vitro). Antimicrobial peptide that is an integral component of the innate immune system. Binds to bacterial lipopolysaccharides (LPS). Causes membrane permeabilization by forming transmembrane pores (in vitro). Causes lysis of E.coli. Exhibits antimicrobial activity against Gram-negative bacteria such as P.aeruginosa, S.typhimurium, E.aerogenes, E.coli and P.syringae, Gram-positive bacteria such as L.monocytogenes, S.epidermidis, S.pyogenes and S.aureus, as well as vancomycin-resistant enterococci (in vitro). Exhibits antimicrobial activity against methicillin-resistant S.aureus, P.mirabilis, and C.albicans in low-salt media, but not in media containing 100 mM NaCl (in vitro). Forms chiral supramolecular assemblies with quinolone signal (PQS) molecules of P.aeruginosa, which may lead to interference of bacterial quorum signaling and perturbance of bacterial biofilm formation. May form supramolecular fiber-like assemblies on bacterial membranes. Induces cytokine and chemokine producation as well as TNF/TNFA and CSF2/GMCSF production in normal human keratinocytes. Exhibits hemolytic activity against red blood cells. Functionally, exhibits antimicrobial activity against E.coli and B.megaterium (in vitro). In Ateles fusciceps (Brown-headed spider monkey), this protein is Cathelicidin antimicrobial peptide.